Consider the following 196-residue polypeptide: Holliday junction branch migration complex subunit RuvA (196 aa).

Positions 1–63 (MINKIYGKVI…ENELKLFGFL (63 aa)) are domain I. The interval 64–139 (NSDERETFKS…KLLINNELES (76 aa)) is domain II. Position 139 (S139) is a region of interest, flexible linker. A domain III region spans residues 139 to 196 (SSLFRFKELEESIVSMGFDRKIVNSKLKEAFNLVEFSNLKDSEKEQFLFKEVLKRMSN).

Belongs to the RuvA family. As to quaternary structure, homotetramer. Forms an RuvA(8)-RuvB(12)-Holliday junction (HJ) complex. HJ DNA is sandwiched between 2 RuvA tetramers; dsDNA enters through RuvA and exits via RuvB. An RuvB hexamer assembles on each DNA strand where it exits the tetramer. Each RuvB hexamer is contacted by two RuvA subunits (via domain III) on 2 adjacent RuvB subunits; this complex drives branch migration. In the full resolvosome a probable DNA-RuvA(4)-RuvB(12)-RuvC(2) complex forms which resolves the HJ.

It localises to the cytoplasm. Its function is as follows. The RuvA-RuvB-RuvC complex processes Holliday junction (HJ) DNA during genetic recombination and DNA repair, while the RuvA-RuvB complex plays an important role in the rescue of blocked DNA replication forks via replication fork reversal (RFR). RuvA specifically binds to HJ cruciform DNA, conferring on it an open structure. The RuvB hexamer acts as an ATP-dependent pump, pulling dsDNA into and through the RuvAB complex. HJ branch migration allows RuvC to scan DNA until it finds its consensus sequence, where it cleaves and resolves the cruciform DNA. The protein is Holliday junction branch migration complex subunit RuvA of Borreliella afzelii (strain PKo) (Borrelia afzelii).